The following is a 308-amino-acid chain: Phenylcoumaran benzylic ether reductase Betv6 (308 aa).

NADP(+)-binding positions include 11 to 17 (GGTGYIG), arginine 36, and lysine 45. Catalysis depends on lysine 133, which acts as the Proton acceptor. Arginine 137 contacts NADP(+).

This sequence belongs to the NmrA-type oxidoreductase family. Isoflavone reductase subfamily.

The enzyme catalyses (-)-dehydrodiconiferyl alcohol + NADPH + H(+) = (S)-isodihydrodehydrodiconiferyl alcohol + NADP(+). It catalyses the reaction (+)-dehydrodiconiferyl alcohol + NADPH + H(+) = (R)-isodihydrodehydrodiconiferyl alcohol + NADP(+). Its function is as follows. Oxidoreductase involved in lignan biosynthesis. Catalyzes the NADPH-dependent reduction of phenylcoumaran benzylic ethers. Converts dehydrodiconiferyl alcohol (DDC) to isodihydrodehydrodiconiferyl alcohol (IDDDC). This Betula pendula (European white birch) protein is Phenylcoumaran benzylic ether reductase Betv6.